The sequence spans 133 residues: Ribosome-binding factor A (133 aa).

This sequence belongs to the RbfA family. Monomer. Binds 30S ribosomal subunits, but not 50S ribosomal subunits or 70S ribosomes.

The protein localises to the cytoplasm. Functionally, one of several proteins that assist in the late maturation steps of the functional core of the 30S ribosomal subunit. Associates with free 30S ribosomal subunits (but not with 30S subunits that are part of 70S ribosomes or polysomes). Required for efficient processing of 16S rRNA. May interact with the 5'-terminal helix region of 16S rRNA. The protein is Ribosome-binding factor A of Escherichia coli O127:H6 (strain E2348/69 / EPEC).